The primary structure comprises 235 residues: Orotidine 5'-phosphate decarboxylase (235 aa).

Substrate is bound by residues D11, K33, 60–69, T119, R180, Q189, G209, and R210; that span reads DLKFHDIPNT. The active-site Proton donor is the K62.

The protein belongs to the OMP decarboxylase family. Type 1 subfamily. In terms of assembly, homodimer.

It carries out the reaction orotidine 5'-phosphate + H(+) = UMP + CO2. It functions in the pathway pyrimidine metabolism; UMP biosynthesis via de novo pathway; UMP from orotate: step 2/2. Its function is as follows. Catalyzes the decarboxylation of orotidine 5'-monophosphate (OMP) to uridine 5'-monophosphate (UMP). This chain is Orotidine 5'-phosphate decarboxylase, found in Alkalilimnicola ehrlichii (strain ATCC BAA-1101 / DSM 17681 / MLHE-1).